A 373-amino-acid polypeptide reads, in one-letter code: D-alanine--D-alanine ligase (373 aa).

In terms of domain architecture, ATP-grasp spans 156–363 (KKLWSAAGLP…YPTLLATMVE (208 aa)). 184–239 (LQRLGLPAYVKPARGGSSIGVSRVSSFDELPAAIAAARRHDPKVIVEAAINGRELE) is a binding site for ATP. The Mg(2+) site is built by Asp318, Glu330, and Asn332.

Belongs to the D-alanine--D-alanine ligase family. Mg(2+) serves as cofactor. The cofactor is Mn(2+).

It localises to the cytoplasm. It catalyses the reaction 2 D-alanine + ATP = D-alanyl-D-alanine + ADP + phosphate + H(+). The protein operates within cell wall biogenesis; peptidoglycan biosynthesis. Functionally, cell wall formation. This Mycobacterium ulcerans (strain Agy99) protein is D-alanine--D-alanine ligase.